The chain runs to 363 residues: G-protein coupled receptor 78 (363 aa).

The Extracellular segment spans residues 1–7; sequence MGPGEAL. Residues 8-28 traverse the membrane as a helical segment; that stretch reads LAGLLVMVLAVALLSNALVLL. Topologically, residues 29–47 are cytoplasmic; the sequence is CCAYSAELRTRASGVLLVN. A helical membrane pass occupies residues 48 to 68; that stretch reads LSLGHLLLAALDMPFTLLGVM. The Extracellular portion of the chain corresponds to 69–80; it reads RGRTPSAPGACQ. An intrachain disulfide couples C79 to C156. Residues 81–101 form a helical membrane-spanning segment; the sequence is VIGFLDTFLASNAALSVAALS. Over 102 to 122 the chain is Cytoplasmic; it reads ADQWLAVGFPLRYAGRLRPRY. Residues 123 to 143 traverse the membrane as a helical segment; sequence AGLLLGCAWGQSLAFSGAALG. Residues 144–168 are Extracellular-facing; it reads CSWLGYSSAFASCSLRLPPEPERPR. Residues 169-189 form a helical membrane-spanning segment; that stretch reads FAAFTATLHAVGFVLPLAVLC. At 190 to 242 the chain is on the cytoplasmic side; the sequence is LTSLQVHRVARRHCQRMDTVTMKALALLADLHPSVRQRCLIQQKRRRHRATRK. The chain crosses the membrane as a helical span at residues 243–263; that stretch reads IGIAIATFLICFAPYVMTRLA. The Extracellular segment spans residues 264–277; the sequence is ELVPFVTVNAQWGI. A helical transmembrane segment spans residues 278–297; sequence LSKCLTYSKAVADPFTYSLL. Residues 298-363 lie on the Cytoplasmic side of the membrane; the sequence is RRPFRQVLAG…ENDSCLQQTH (66 aa). The segment at 340–363 is disordered; it reads TPRPASTHNGSVDTENDSCLQQTH. Over residues 343-363 the composition is skewed to polar residues; sequence PASTHNGSVDTENDSCLQQTH.

The protein belongs to the G-protein coupled receptor 1 family. As to expression, high level of expression in placenta. Expressed throughout the brain at low level. No expression detected in skeletal muscle, lung, heart, liver, pancreas, or kidney.

The protein localises to the cell membrane. Orphan receptor. Displays a significant level of constitutive activity. Its effect is mediated by G(s)-alpha protein that stimulate adenylate cyclase, resulting in an elevation of intracellular cAMP. This is G-protein coupled receptor 78 (GPR78) from Homo sapiens (Human).